Consider the following 109-residue polypeptide: Probable glutaredoxin slr1562 (109 aa).

In terms of domain architecture, Glutaredoxin spans 11 to 109 (LSGRQADGIK…PLLATPPNPA (99 aa)). An intrachain disulfide couples C31 to C34.

It belongs to the glutaredoxin family.

Functionally, has a glutathione-disulfide oxidoreductase activity in the presence of NADPH and glutathione reductase. Reduces low molecular weight disulfides and proteins. This chain is Probable glutaredoxin slr1562, found in Synechocystis sp. (strain ATCC 27184 / PCC 6803 / Kazusa).